The chain runs to 1114 residues: M-phase phosphoprotein 9 (1114 aa).

Disordered regions lie at residues 1-55, 106-161, 183-207, 267-301, and 410-468; these read MEDF…KTGP, RPSC…DCHV, AKEPTEPLEPGAASQGQHPASVVQA, TSWAQRLKQNQSKQAHTEDDCSGPKPGSELNWKPP, and VLEP…STIP. Over residues 24-51 the composition is skewed to polar residues; that stretch reads APQSLGLSLHANRSSPHLSTNGVSSFSG. The span at 106–119 shows a compositional bias: low complexity; it reads RPSCSSSSVSEQVS. Over residues 149–161 the composition is skewed to polar residues; the sequence is QPASSTSYPDCHV. 2 stretches are compositionally biased toward polar residues: residues 267–280 and 429–446; these read TSWAQRLKQNQSKQ and HNPSQVSGFSKYPSTTRA. The required for its centrosomal localization stretch occupies residues 368 to 729; that stretch reads LSQVLTLDPG…EAQVKQAEHE (362 aa). The segment at 382–431 is interaction with CEP97; the sequence is KPKEHVAGIQAHGFLHALDDRISFSPDSVLEPSLSRHSDTDSSSQASHNP. The stretch at 574–733 forms a coiled coil; the sequence is DRCGQLDSAL…KQAEHESMLS (160 aa). At Ser-710 the chain carries Phosphoserine; by TTBK2. Residue Lys-713 forms a Glycyl lysine isopeptide (Lys-Gly) (interchain with G-Cter in ubiquitin) linkage. Ser-717 carries the phosphoserine; by TTBK2 modification. Disordered stretches follow at residues 727–755, 840–931, and 975–1002; these read EHESMLSLRNGAKVPERPSRSNSVATSDV, SWGT…GFSH, and EEKKYSEKNSDDPVNPSSCPEHSPNGLK. An interaction with KIF24 region spans residues 730 to 963; the sequence is SMLSLRNGAK…PVSTLQQTTA (234 aa). Positions 852–868 are enriched in polar residues; the sequence is SKLVNSRQTEPSVNTGR. Positions 881 to 898 are enriched in low complexity; it reads QTSASQRSSSLPPSSRKA. At Ser-926 the chain carries Phosphoserine. Residues 975–985 are compositionally biased toward basic and acidic residues; the sequence is EEKKYSEKNSD. The stretch at 1040-1105 forms a coiled coil; that stretch reads RTLAETERFF…GSVRMTLKKF (66 aa).

Interacts with CCP110, CEP97 and KIF24. In terms of processing, TTBK2-mediated phosphorylation at Ser-710 and Ser-717, promotes its ubiquitination at Lys-713 leading to proteasomal degradation, loss of MPHOSPH9 facilitates the removal of the CP110-CEP97 complex from the mother centrioles, promoting the initiation of ciliogenesis. Phosphorylated in M (mitotic) phase. Post-translationally, ubiquitinated at Lys-713, leading to proteasomal degradation.

The protein localises to the cytoplasm. Its subcellular location is the cytoskeleton. The protein resides in the microtubule organizing center. It is found in the centrosome. It localises to the centriole. The protein localises to the golgi apparatus membrane. In terms of biological role, negatively regulates cilia formation by recruiting the CP110-CEP97 complex (a negative regulator of ciliogenesis) at the distal end of the mother centriole in ciliary cells. At the beginning of cilia formation, MPHOSPH9 undergoes TTBK2-mediated phosphorylation and degradation via the ubiquitin-proteasome system and removes itself and the CP110-CEP97 complex from the distal end of the mother centriole, which subsequently promotes cilia formation. In Mus musculus (Mouse), this protein is M-phase phosphoprotein 9 (Mphosph9).